A 247-amino-acid chain; its full sequence is MPRFKLTLEYDGSNYAGWQRQAELRTIQSALEQALFHFSGQQLTITTAGRTDAGVHATGQVAHVDFEKNWRTHTVRDALNAHLQKQGDNIAILHVQNVPDSFDARFSAIKRHYLFKILNRRSPPALNTKRVWWIPKPLNAQAMHEAAQKLVGKHDFTTFRSAHCQAKSPIRTLERLDVQREGEEIFLYAQARSFLHHQIRSFAGSLMEVGIGRWTTQDLEAALHAKDRTRCGMVAPPSGLYLTKVEY.

Asp-52 functions as the Nucleophile in the catalytic mechanism. A substrate-binding site is contributed by Tyr-113.

It belongs to the tRNA pseudouridine synthase TruA family. Homodimer.

The catalysed reaction is uridine(38/39/40) in tRNA = pseudouridine(38/39/40) in tRNA. Functionally, formation of pseudouridine at positions 38, 39 and 40 in the anticodon stem and loop of transfer RNAs. This is tRNA pseudouridine synthase A from Bartonella henselae (strain ATCC 49882 / DSM 28221 / CCUG 30454 / Houston 1) (Rochalimaea henselae).